A 369-amino-acid polypeptide reads, in one-letter code: Anhydro-N-acetylmuramic acid kinase (369 aa).

An ATP-binding site is contributed by 12 to 19 (GTSLDGVD).

It belongs to the anhydro-N-acetylmuramic acid kinase family.

The enzyme catalyses 1,6-anhydro-N-acetyl-beta-muramate + ATP + H2O = N-acetyl-D-muramate 6-phosphate + ADP + H(+). It functions in the pathway amino-sugar metabolism; 1,6-anhydro-N-acetylmuramate degradation. The protein operates within cell wall biogenesis; peptidoglycan recycling. In terms of biological role, catalyzes the specific phosphorylation of 1,6-anhydro-N-acetylmuramic acid (anhMurNAc) with the simultaneous cleavage of the 1,6-anhydro ring, generating MurNAc-6-P. Is required for the utilization of anhMurNAc either imported from the medium or derived from its own cell wall murein, and thus plays a role in cell wall recycling. The protein is Anhydro-N-acetylmuramic acid kinase of Actinobacillus pleuropneumoniae serotype 7 (strain AP76).